Reading from the N-terminus, the 351-residue chain is Transmembrane protein DDB_G0272716 (351 aa).

N-linked (GlcNAc...) asparagine glycosylation is found at asparagine 4 and asparagine 59. Helical transmembrane passes span 175–195 and 215–235; these read FSSL…TAIG and VVAP…GAFI. Asparagine 345 is a glycosylation site (N-linked (GlcNAc...) asparagine).

It localises to the membrane. The chain is Transmembrane protein DDB_G0272716 from Dictyostelium discoideum (Social amoeba).